The sequence spans 409 residues: Tyrosine--tRNA ligase (409 aa).

Positions 54-63 match the 'HIGH' region motif; it reads PTAPDIHLGH. The 'KMSKS' region signature appears at 238–242; it reads KMSKS. Lys-241 provides a ligand contact to ATP. An S4 RNA-binding domain is found at 347 to 407; sequence QGILRILREA…GKRKFARVKL (61 aa).

This sequence belongs to the class-I aminoacyl-tRNA synthetase family. TyrS type 2 subfamily. Homodimer.

Its subcellular location is the cytoplasm. It carries out the reaction tRNA(Tyr) + L-tyrosine + ATP = L-tyrosyl-tRNA(Tyr) + AMP + diphosphate + H(+). Its function is as follows. Catalyzes the attachment of tyrosine to tRNA(Tyr) in a two-step reaction: tyrosine is first activated by ATP to form Tyr-AMP and then transferred to the acceptor end of tRNA(Tyr). The sequence is that of Tyrosine--tRNA ligase from Bordetella bronchiseptica (strain ATCC BAA-588 / NCTC 13252 / RB50) (Alcaligenes bronchisepticus).